The chain runs to 336 residues: Holliday junction branch migration complex subunit RuvB (336 aa).

A large ATPase domain (RuvB-L) region spans residues 4–184 (ADRLISAGTT…FGIVQRLEFY (181 aa)). ATP is bound by residues I23, R24, G65, K68, T69, T70, 131–133 (EDY), R174, Y184, and R221. T69 is a binding site for Mg(2+). The tract at residues 185 to 255 (QVPDLQYIVS…IAAQALDMLN (71 aa)) is small ATPAse domain (RuvB-S). The segment at 258 to 336 (AEGFDYMDRK…HFGITPPEMP (79 aa)) is head domain (RuvB-H). The DNA site is built by R294, R313, and R318.

This sequence belongs to the RuvB family. As to quaternary structure, homohexamer. Forms an RuvA(8)-RuvB(12)-Holliday junction (HJ) complex. HJ DNA is sandwiched between 2 RuvA tetramers; dsDNA enters through RuvA and exits via RuvB. An RuvB hexamer assembles on each DNA strand where it exits the tetramer. Each RuvB hexamer is contacted by two RuvA subunits (via domain III) on 2 adjacent RuvB subunits; this complex drives branch migration. In the full resolvosome a probable DNA-RuvA(4)-RuvB(12)-RuvC(2) complex forms which resolves the HJ.

The protein localises to the cytoplasm. It carries out the reaction ATP + H2O = ADP + phosphate + H(+). In terms of biological role, the RuvA-RuvB-RuvC complex processes Holliday junction (HJ) DNA during genetic recombination and DNA repair, while the RuvA-RuvB complex plays an important role in the rescue of blocked DNA replication forks via replication fork reversal (RFR). RuvA specifically binds to HJ cruciform DNA, conferring on it an open structure. The RuvB hexamer acts as an ATP-dependent pump, pulling dsDNA into and through the RuvAB complex. RuvB forms 2 homohexamers on either side of HJ DNA bound by 1 or 2 RuvA tetramers; 4 subunits per hexamer contact DNA at a time. Coordinated motions by a converter formed by DNA-disengaged RuvB subunits stimulates ATP hydrolysis and nucleotide exchange. Immobilization of the converter enables RuvB to convert the ATP-contained energy into a lever motion, pulling 2 nucleotides of DNA out of the RuvA tetramer per ATP hydrolyzed, thus driving DNA branch migration. The RuvB motors rotate together with the DNA substrate, which together with the progressing nucleotide cycle form the mechanistic basis for DNA recombination by continuous HJ branch migration. Branch migration allows RuvC to scan DNA until it finds its consensus sequence, where it cleaves and resolves cruciform DNA. The protein is Holliday junction branch migration complex subunit RuvB of Escherichia coli O17:K52:H18 (strain UMN026 / ExPEC).